Reading from the N-terminus, the 679-residue chain is UvrABC system protein B (679 aa).

One can recognise a Helicase ATP-binding domain in the interval 31–414 (ENLTDGLAHQ…ELEKSGSEII (384 aa)). Residue 44-51 (GVTGSGKT) coordinates ATP. The Beta-hairpin motif lies at 97–120 (YYDYYQPEAYVPSSDTFIEKDASI). Residues 436–589 (QVDDLLSEAR…QTKYNEEHGI (154 aa)) enclose the Helicase C-terminal domain. In terms of domain architecture, UVR spans 639–674 (QQQIKKLEQQMYKFAQDLEFEKAAAIRDQLHQLREQ).

This sequence belongs to the UvrB family. Forms a heterotetramer with UvrA during the search for lesions. Interacts with UvrC in an incision complex.

The protein localises to the cytoplasm. Functionally, the UvrABC repair system catalyzes the recognition and processing of DNA lesions. A damage recognition complex composed of 2 UvrA and 2 UvrB subunits scans DNA for abnormalities. Upon binding of the UvrA(2)B(2) complex to a putative damaged site, the DNA wraps around one UvrB monomer. DNA wrap is dependent on ATP binding by UvrB and probably causes local melting of the DNA helix, facilitating insertion of UvrB beta-hairpin between the DNA strands. Then UvrB probes one DNA strand for the presence of a lesion. If a lesion is found the UvrA subunits dissociate and the UvrB-DNA preincision complex is formed. This complex is subsequently bound by UvrC and the second UvrB is released. If no lesion is found, the DNA wraps around the other UvrB subunit that will check the other stand for damage. This is UvrABC system protein B from Haemophilus influenzae (strain ATCC 51907 / DSM 11121 / KW20 / Rd).